The primary structure comprises 810 residues: Phenylalanine--tRNA ligase beta subunit (810 aa).

The tRNA-binding domain maps to 39–154 (APPTEKIVVG…EGTPVGQDIR (116 aa)). The B5 domain occupies 405 to 480 (PQRAPVSMRA…RIYGFEKIPA (76 aa)). Mg(2+) is bound by residues D458, D464, E467, and E468. One can recognise an FDX-ACB domain in the interval 707-809 (SKFPPVRRDI…MARVYGARLR (103 aa)).

Belongs to the phenylalanyl-tRNA synthetase beta subunit family. Type 1 subfamily. In terms of assembly, tetramer of two alpha and two beta subunits. Mg(2+) serves as cofactor.

It localises to the cytoplasm. The catalysed reaction is tRNA(Phe) + L-phenylalanine + ATP = L-phenylalanyl-tRNA(Phe) + AMP + diphosphate + H(+). In Burkholderia pseudomallei (strain 1710b), this protein is Phenylalanine--tRNA ligase beta subunit.